We begin with the raw amino-acid sequence, 309 residues long: HPr kinase/phosphorylase (309 aa).

Catalysis depends on residues H139 and K160. An ATP-binding site is contributed by 154–161 (GESGIGKS). Position 161 (S161) interacts with Mg(2+). Residue D178 is the Proton acceptor; for phosphorylation activity. Proton donor; for dephosphorylation activity of the active site. The segment at 202–211 (IELRGIGIID) is important for the catalytic mechanism of both phosphorylation and dephosphorylation. Residue E203 coordinates Mg(2+). R244 is an active-site residue. Positions 265–270 (PIRPGR) are important for the catalytic mechanism of dephosphorylation.

The protein belongs to the HPrK/P family. As to quaternary structure, homohexamer. The cofactor is Mg(2+).

It carries out the reaction [HPr protein]-L-serine + ATP = [HPr protein]-O-phospho-L-serine + ADP + H(+). It catalyses the reaction [HPr protein]-O-phospho-L-serine + phosphate + H(+) = [HPr protein]-L-serine + diphosphate. Its function is as follows. Catalyzes the ATP- as well as the pyrophosphate-dependent phosphorylation of a specific serine residue in HPr, a phosphocarrier protein of the phosphoenolpyruvate-dependent sugar phosphotransferase system (PTS). HprK/P also catalyzes the pyrophosphate-producing, inorganic phosphate-dependent dephosphorylation (phosphorolysis) of seryl-phosphorylated HPr (P-Ser-HPr). The two antagonistic activities of HprK/P are regulated by several intracellular metabolites, which change their concentration in response to the absence or presence of rapidly metabolisable carbon sources (glucose, fructose, etc.) in the growth medium. Therefore, by controlling the phosphorylation state of HPr, HPrK/P is a sensor enzyme that plays a major role in the regulation of carbon metabolism and sugar transport: it mediates carbon catabolite repression (CCR), and regulates PTS-catalyzed carbohydrate uptake and inducer exclusion. This Lachnoclostridium phytofermentans (strain ATCC 700394 / DSM 18823 / ISDg) (Clostridium phytofermentans) protein is HPr kinase/phosphorylase.